The following is a 138-amino-acid chain: Cysteine desulfuration protein SufE (138 aa).

C51 serves as the catalytic Cysteine persulfide intermediate.

This sequence belongs to the SufE family. Homodimer. Interacts with SufS.

The protein localises to the cytoplasm. It participates in cofactor biosynthesis; iron-sulfur cluster biosynthesis. Its function is as follows. Participates in cysteine desulfuration mediated by SufS. Cysteine desulfuration mobilizes sulfur from L-cysteine to yield L-alanine and constitutes an essential step in sulfur metabolism for biosynthesis of a variety of sulfur-containing biomolecules. Functions as a sulfur acceptor for SufS, by mediating the direct transfer of the sulfur atom from the S-sulfanylcysteine of SufS, an intermediate product of cysteine desulfuration process. This Escherichia coli O17:K52:H18 (strain UMN026 / ExPEC) protein is Cysteine desulfuration protein SufE.